Here is a 269-residue protein sequence, read N- to C-terminus: MPANNPFKTALAARQAQIGLWLSMATPYLAEVSATAGFDWLLIDGEHAPNDLRSTLHALQAVAPYPVQPVVRAVAGEVPLIKQLLDIGVRSLLVPMVDTAEQARMVVSATRYPPQGIRGVGSAIARASQWSARTDYLDVADDEVCLLVQAETVTALQNLEAICAVDGIDGVFIGPADLAASMGHRGRPGHPEVQAAIEGAMRTIIASGKAAGTLTSDPALARRYLDLGCTFVATGVDVMLYANAARKLAASFREQPSDAPAADKPSAAY.

The Proton acceptor role is filled by H47. A divalent metal cation-binding residues include E151 and D177.

The protein belongs to the HpcH/HpaI aldolase family. It depends on a divalent metal cation as a cofactor.

It catalyses the reaction D-glyceraldehyde + 3-hydroxypyruvate = 2-dehydro-D-gluconate. The catalysed reaction is D-glyceraldehyde + 3-hydroxypyruvate = (3R,4S,5R)-3,4,5,6-tetrahydroxy-2-oxohexanoate. The enzyme catalyses D-glyceraldehyde + 3-hydroxypyruvate = 2-dehydro-D-galactonate. It carries out the reaction D-glyceraldehyde + pyruvate = 2-dehydro-3-deoxy-L-galactonate. It catalyses the reaction 2-dehydro-3-deoxy-D-gluconate = D-glyceraldehyde + pyruvate. Functionally, aldolase which can catalyze in vitro the aldolisation reaction between hydroxypyruvate (HPA) or pyruvate (PA) and D-glyceraldehyde (D-GA). The condensation of hydroxypyruvate and D-glyceraldehyde produces 2-dehydro-D-gluconate as the major product, (3R,4S,5R)-3,4,5,6-tetrahydroxy-2-oxohexanoate and 2-dehydro-D-galactonate. The condensation of pyruvate and D-glyceraldehyde produces 2-dehydro-3-deoxy-L-galactonate as the major product and 2-dehydro-3-deoxy-D-gluconate. The polypeptide is Hydroxypyruvate/pyruvate aldolase (Cupriavidus necator (strain ATCC 17699 / DSM 428 / KCTC 22496 / NCIMB 10442 / H16 / Stanier 337) (Ralstonia eutropha)).